A 484-amino-acid chain; its full sequence is 6-phosphogluconate dehydrogenase, decarboxylating (484 aa).

Residues 11–16 (GLAVMG), 34–36 (NRT), 76–78 (VRA), and Asn104 contribute to the NADP(+) site. Substrate-binding positions include Asn104 and 130–132 (SGG). Catalysis depends on Lys185, which acts as the Proton acceptor. Position 188 to 189 (188 to 189 (HN)) interacts with substrate. Glu192 serves as the catalytic Proton donor. Tyr193, Lys262, Arg289, Arg447, and His453 together coordinate substrate.

It belongs to the 6-phosphogluconate dehydrogenase family. Homodimer.

The enzyme catalyses 6-phospho-D-gluconate + NADP(+) = D-ribulose 5-phosphate + CO2 + NADPH. It functions in the pathway carbohydrate degradation; pentose phosphate pathway; D-ribulose 5-phosphate from D-glucose 6-phosphate (oxidative stage): step 3/3. Catalyzes the oxidative decarboxylation of 6-phosphogluconate to ribulose 5-phosphate and CO(2), with concomitant reduction of NADP to NADPH. The protein is 6-phosphogluconate dehydrogenase, decarboxylating of Aggregatibacter actinomycetemcomitans (Actinobacillus actinomycetemcomitans).